A 298-amino-acid polypeptide reads, in one-letter code: tRNA pseudouridine synthase A (298 aa).

Aspartate 56 serves as the catalytic Nucleophile. Tyrosine 125 provides a ligand contact to substrate.

The protein belongs to the tRNA pseudouridine synthase TruA family. Homodimer.

It carries out the reaction uridine(38/39/40) in tRNA = pseudouridine(38/39/40) in tRNA. Its function is as follows. Formation of pseudouridine at positions 38, 39 and 40 in the anticodon stem and loop of transfer RNAs. This chain is tRNA pseudouridine synthase A, found in Bifidobacterium animalis subsp. lactis (strain AD011).